The primary structure comprises 198 residues: Probable septum site-determining protein MinC (198 aa).

This sequence belongs to the MinC family. As to quaternary structure, interacts with MinD and FtsZ.

Cell division inhibitor that blocks the formation of polar Z ring septums. Rapidly oscillates between the poles of the cell to destabilize FtsZ filaments that have formed before they mature into polar Z rings. Prevents FtsZ polymerization. The chain is Probable septum site-determining protein MinC from Thermosipho melanesiensis (strain DSM 12029 / CIP 104789 / BI429).